A 314-amino-acid polypeptide reads, in one-letter code: D-alanine--D-alanine ligase (314 aa).

One can recognise an ATP-grasp domain in the interval 112–307; it reads KQVWQSLGLP…FQQLVLSILD (196 aa). 138–193 provides a ligand contact to ATP; sequence AQMLGFPLIVKPAHEGSSIGMAKVGDVAELIAAWRAASAYDAQVLVEQWIQGPEFT. Residues Asp261, Glu274, and Asn276 each coordinate Mg(2+).

Belongs to the D-alanine--D-alanine ligase family. Requires Mg(2+) as cofactor. Mn(2+) is required as a cofactor.

Its subcellular location is the cytoplasm. The catalysed reaction is 2 D-alanine + ATP = D-alanyl-D-alanine + ADP + phosphate + H(+). It participates in cell wall biogenesis; peptidoglycan biosynthesis. Its function is as follows. Cell wall formation. The polypeptide is D-alanine--D-alanine ligase (Stutzerimonas stutzeri (strain A1501) (Pseudomonas stutzeri)).